Consider the following 305-residue polypeptide: MNFNYFILVLFFITSGHAKSETREVHQEAENHIKRGSNTGFNFKTLDKEKRSAEEQNLAEHLVTRGSNKGFNFMVDMINALSNGKRSAEEQDLAEHLVTRGSNKGFNFMVDMINALSNGKRSAEEQDLAEDLVTRGSNKGFNFMVDMIQALSKGKRSAEDQDLAEDLVTRGSNKGFNFMVDMIQALSNGKRSAEEQDLAEHLVTRGSNKGFNFMVDMINALSNGKRSAEEQDLSEDLVTRGSNKGFNFMVDMINALSNGKRSAEEQDLVEDLVTRRSNKGFNFMVDMIQALSKGKRSAEQEKDMK.

A signal peptide spans 1-18 (MNFNYFILVLFFITSGHA). 2 consecutive propeptides follow at residues 19–35 (KSETREVHQEAENHIKR) and 52–65 (SAEEQNLAEHLVTR). An Asparagine amide modification is found at Asn83. Positions 87 to 100 (SAEEQDLAEHLVTR) are excised as a propeptide. Residue Asn118 is modified to Asparagine amide. Positions 122 to 135 (SAEEQDLAEDLVTR) are excised as a propeptide. Lys153 is modified (lysine amide). A propeptide spanning residues 157–170 (SAEDQDLAEDLVTR) is cleaved from the precursor. At Asn188 the chain carries Asparagine amide. A propeptide spanning residues 192–205 (SAEEQDLAEHLVTR) is cleaved from the precursor. Residue Asn223 is modified to Asparagine amide. Residues 227–240 (SAEEQDLSEDLVTR) constitute a propeptide that is removed on maturation. Asn258 is modified (asparagine amide). Positions 262 to 275 (SAEEQDLVEDLVTR) are excised as a propeptide. Position 293 is a lysine amide (Lys293). Residues 297-305 (SAEQEKDMK) constitute a propeptide that is removed on maturation.

This sequence belongs to the maximin-S family. In terms of tissue distribution, expressed by the skin dorsal glands.

The protein localises to the secreted. In terms of biological role, maximin-S1 has no antimicrobial activity. Has no hemolytic activity. Maximin-S2 has an activity against mycoplasma but has no activity against common Gram-positive and Gram-negative bacteria nor fungi. Has no hemolytic activity. Its function is as follows. Maximin-S3 has an activity against mycoplasma but has no activity against common Gram-positive and Gram-negative bacteria nor fungi. Has no hemolytic activity. Functionally, maximin-S4 has an activity against mycoplasma but has no activity against common Gram-positive and Gram-negative bacteria nor fungi. Has no hemolytic activity. In terms of biological role, maximin-S5 has an activity against mycoplasma but has no activity against common Gram-positive and Gram-negative bacteria nor fungi. Has no hemolytic activity. In Bombina maxima (Giant fire-bellied toad), this protein is Maximins-S type B/C.